Consider the following 340-residue polypeptide: MRLCLIPWNTTPHRVLPPVVWSAPSRKKPVLSARNSMMFGHLSPVRNPRLRGKFNLQLPSLDEQVIPTRLPKMEVRAEEPKEATEVKDQVETQGQEDNKTGPCSNGKAASTSRPLETQGNLTSSWYNPRPLEGNVHLKSLTEKNQTDKAQVHAVSFYSKGHGVTSSHSPAGGILPFGKPDPLPAVLPAPVPDCSLWPEKAALKVLGKDHLPSSPGLLMVGEDMQPKDPAALRSSRSSPPRAAGHRPRKRKLSGPPLQLQQTPPLQLRWDRDEGPPPAKLPCLSPEALLVGKASQREGRLQQGNMRKNVRVLSRTSKFRRLRQLLRRRKKRWQGRRGGSRL.

Basic and acidic residues predominate over residues 75-90; the sequence is VRAEEPKEATEVKDQV. Disordered regions lie at residues 75–130 and 215–281; these read VRAE…NPRP and GLLM…KLPC. Positions 91 to 126 are enriched in polar residues; the sequence is ETQGQEDNKTGPCSNGKAASTSRPLETQGNLTSSWY. The span at 228-241 shows a compositional bias: low complexity; the sequence is PAALRSSRSSPPRA. Positions 242–251 are enriched in basic residues; it reads AGHRPRKRKL. The span at 254 to 266 shows a compositional bias: low complexity; sequence PPLQLQQTPPLQL.

The protein belongs to the UPF0607 family.

This chain is Putative UPF0607 protein ENSP00000332738, found in Homo sapiens (Human).